The primary structure comprises 1032 residues: Error-prone DNA polymerase (1032 aa).

Belongs to the DNA polymerase type-C family. DnaE2 subfamily.

It is found in the cytoplasm. The catalysed reaction is DNA(n) + a 2'-deoxyribonucleoside 5'-triphosphate = DNA(n+1) + diphosphate. In terms of biological role, DNA polymerase involved in damage-induced mutagenesis and translesion synthesis (TLS). It is not the major replicative DNA polymerase. This Hahella chejuensis (strain KCTC 2396) protein is Error-prone DNA polymerase.